Consider the following 202-residue polypeptide: ATP-dependent Clp protease proteolytic subunit (202 aa).

The active-site Nucleophile is the serine 106. Histidine 131 is a catalytic residue.

This sequence belongs to the peptidase S14 family. In terms of assembly, fourteen ClpP subunits assemble into 2 heptameric rings which stack back to back to give a disk-like structure with a central cavity, resembling the structure of eukaryotic proteasomes.

The protein resides in the cytoplasm. It carries out the reaction Hydrolysis of proteins to small peptides in the presence of ATP and magnesium. alpha-casein is the usual test substrate. In the absence of ATP, only oligopeptides shorter than five residues are hydrolyzed (such as succinyl-Leu-Tyr-|-NHMec, and Leu-Tyr-Leu-|-Tyr-Trp, in which cleavage of the -Tyr-|-Leu- and -Tyr-|-Trp bonds also occurs).. Functionally, cleaves peptides in various proteins in a process that requires ATP hydrolysis. Has a chymotrypsin-like activity. Plays a major role in the degradation of misfolded proteins. In Shewanella sp. (strain ANA-3), this protein is ATP-dependent Clp protease proteolytic subunit.